The chain runs to 513 residues: Histidine ammonia-lyase (513 aa).

The 5-imidazolinone (Ala-Gly) cross-link spans 144–146 (ASG). At S145 the chain carries 2,3-didehydroalanine (Ser).

This sequence belongs to the PAL/histidase family. Contains an active site 4-methylidene-imidazol-5-one (MIO), which is formed autocatalytically by cyclization and dehydration of residues Ala-Ser-Gly.

It localises to the cytoplasm. It carries out the reaction L-histidine = trans-urocanate + NH4(+). The protein operates within amino-acid degradation; L-histidine degradation into L-glutamate; N-formimidoyl-L-glutamate from L-histidine: step 1/3. The sequence is that of Histidine ammonia-lyase from Streptococcus pyogenes serotype M1.